The sequence spans 142 residues: Hemoglobin subunit alpha-1 (142 aa).

The 141-residue stretch at 2-142 (VLSPADKTNI…VSTVLTSKYR (141 aa)) folds into the Globin domain. H59 is an O2 binding site. Residue H88 participates in heme b binding.

It belongs to the globin family. In terms of assembly, heterotetramer of two alpha chains and two beta chains. Red blood cells.

Its function is as follows. Involved in oxygen transport from the lung to the various peripheral tissues. The chain is Hemoglobin subunit alpha-1 from Arctocephalus galapagoensis (Galapagoes fur seal).